The primary structure comprises 233 residues: Homeobox protein ceh-30 (233 aa).

A compositionally biased stretch (polar residues) spans 50 to 85 (NNSTYSHDLDPSPQSVRSDLSTSPRASSPDRNSPMS). 2 disordered regions span residues 50 to 93 (NNST…KART) and 206 to 233 (FQAT…SNSD). Positions 88–147 (SRKARTIFTDKQLQELENTFEKQKYLSVQDRMDLAHRMGLSDTQVKTWYQNRRTKWKRQA) form a DNA-binding region, homeobox. Over residues 224–233 (PQLDVSSNSD) the composition is skewed to polar residues.

The protein localises to the nucleus. Functionally, cell-type specific anti-apoptotic transcription factor required for the sexually dimorphic survival of the male-specific CEM (cephalic male) sensory neurons during sex determination. In hermaphrodites, the homologous cells undergo programmed cell death due to transcriptional repression of ceh-30 by tra-1, the terminal regulator in the sex determination pathway. The polypeptide is Homeobox protein ceh-30 (Caenorhabditis briggsae).